The chain runs to 110 residues: Inner kinetochore subunit mhf1 (110 aa).

The protein belongs to the TAF9 family. CENP-S/MHF1 subfamily. The MHF histone-fold complex is a heterotetramer of 2 mhf1-mhf2 heterodimers. Component of the inner kinetochore constitutive centromere-associated network (CCAN) (also known as central kinetochore Sim4 complex in fission yeast), which is composed of at least cnl2, cnp3, cnp20, fta1, fta2, fta3, fta4, fta6, fta7, mal2, mhf1, mhf2, mis6, mis15, mis17, sim4 and wip1.

Its subcellular location is the nucleus. Functionally, component of a FANCM-MHF complex that promotes gene conversion at blocked replication forks, probably by reversal of the stalled fork. FANCM-MHF promotes non-crossover recombination. This is Inner kinetochore subunit mhf1 from Schizosaccharomyces pombe (strain 972 / ATCC 24843) (Fission yeast).